The primary structure comprises 210 residues: Na(+)-translocating NADH-quinone reductase subunit D (210 aa).

The next 5 helical transmembrane spans lie at 42–62 (FVMT…ISLI), 72–92 (IIAQ…VLKA), 103–123 (VFVG…AYAM), 131–151 (FLDG…VATV), and 178–198 (NGLL…IWGV).

Belongs to the NqrDE/RnfAE family. As to quaternary structure, composed of six subunits; NqrA, NqrB, NqrC, NqrD, NqrE and NqrF.

It is found in the cell inner membrane. The catalysed reaction is a ubiquinone + n Na(+)(in) + NADH + H(+) = a ubiquinol + n Na(+)(out) + NAD(+). Functionally, NQR complex catalyzes the reduction of ubiquinone-1 to ubiquinol by two successive reactions, coupled with the transport of Na(+) ions from the cytoplasm to the periplasm. NqrA to NqrE are probably involved in the second step, the conversion of ubisemiquinone to ubiquinol. This is Na(+)-translocating NADH-quinone reductase subunit D from Aeromonas hydrophila subsp. hydrophila (strain ATCC 7966 / DSM 30187 / BCRC 13018 / CCUG 14551 / JCM 1027 / KCTC 2358 / NCIMB 9240 / NCTC 8049).